The sequence spans 72 residues: Large ribosomal subunit protein bL31 (72 aa).

Positions 17, 19, 37, and 40 each coordinate Zn(2+).

Belongs to the bacterial ribosomal protein bL31 family. Type A subfamily. Part of the 50S ribosomal subunit. Requires Zn(2+) as cofactor.

Functionally, binds the 23S rRNA. This is Large ribosomal subunit protein bL31 from Clostridium botulinum (strain Loch Maree / Type A3).